Reading from the N-terminus, the 215-residue chain is Large ribosomal subunit protein uL3 (215 aa).

Residues 136–155 (GVSISHRSHGSTGQRQDPGK) form a disordered region. Gln151 is subject to N5-methylglutamine.

It belongs to the universal ribosomal protein uL3 family. As to quaternary structure, part of the 50S ribosomal subunit. Forms a cluster with proteins L14 and L19. In terms of processing, methylated by PrmB.

In terms of biological role, one of the primary rRNA binding proteins, it binds directly near the 3'-end of the 23S rRNA, where it nucleates assembly of the 50S subunit. This Rickettsia canadensis (strain McKiel) protein is Large ribosomal subunit protein uL3.